The following is a 297-amino-acid chain: MAVRPVLAVGSYLPHAPWPWGVIDQAARVLLPASTTVRAAVSLPNASAQLVRASGVLPADGTRRAVLYLHGGAFLTCGANSHGRLVELLSKFADSPVLVVDYRLIPKHSIGMALDDCHDGYRWLRLLGYEPEQIVLAGDSAGGYLALALAQRLQEVGEEPAALVAISPLLQLAKEHKQAHPNIKTDAMFPARAFDALDALVASAAARNQVDGEPEELYEPLEHITPGLPRTLIHVSGSEVLLHDAQLAAAKLAAAGVPAEVRVWPGQVHDFQVAASMLPEAIRSLRQIGEYIREATG.

Active-site residues include Ser-140, Glu-239, and His-269.

The protein belongs to the 'GDXG' lipolytic enzyme family.

Its subcellular location is the secreted. The catalysed reaction is a fatty acid ester + H2O = an aliphatic alcohol + a fatty acid + H(+). It catalyses the reaction a butanoate ester + H2O = an aliphatic alcohol + butanoate + H(+). It carries out the reaction an acetyl ester + H2O = an aliphatic alcohol + acetate + H(+). The enzyme catalyses decanoate ester + H2O = decanoate + an aliphatic alcohol + H(+). The catalysed reaction is an octanoate ester + H2O = an aliphatic alcohol + octanoate + H(+). It catalyses the reaction a dodecanoate ester + H2O = an aliphatic alcohol + dodecanoate + H(+). It carries out the reaction hexadecanoate ester + H2O = an aliphatic alcohol + hexadecanoate + H(+). Its activity is regulated as follows. Inhibited by the ionic detergent SDS and by the serine protease inhibitor PMSF. Inhibited by the FDA approved drugs Diosmin, Acarbose and Ouabain. These drugs remain bound in the active site pocket and could be probable drug candidates to combat TB disease. Its function is as follows. Esterase that shows preference for short chain fatty acids. Contributes to the growth of M.tuberculosis during the nutritive stress. Elicits strong humoral response in both extrapulmonary and relapsed cases of tuberculosis patients. The sequence is that of Esterase LipU from Mycobacterium tuberculosis (strain ATCC 25618 / H37Rv).